A 328-amino-acid chain; its full sequence is DNA repair protein RAD51 homolog 4 (328 aa).

The segment at methionine 1–serine 83 is preferentially binds ssDNA. Glycine 107–threonine 114 contacts ATP.

This sequence belongs to the RecA family. RAD51 subfamily. In terms of assembly, part of the BCDX2 complex consisting of RAD51B, RAD51C, RAD51D and XRCC2; the complex has a ring-like structure arranged into a flat disc around a central channel. In the absence of DNA, the BCDX2 subcomplex XRCC2:RAD51D formed a multimeric ring structure; in the presence of single-stranded DNA it formed a filamentous structure with the ssDNA. Interacts with SWSAP1 and ZSWIM7; involved in homologous recombination repair. Interacts with BLM; required for stimulation of BLM activity by the BCDX2 subcomplex XRCC2:RAD51D. In terms of tissue distribution, expressed in colon, prostate, spleen, testis, ovary, thymus and small intestine. Weakly expressed in leukocytes.

It localises to the nucleus. The protein localises to the cytoplasm. Its subcellular location is the cytoskeleton. The protein resides in the microtubule organizing center. It is found in the centrosome. It localises to the chromosome. The protein localises to the telomere. Involved in the homologous recombination repair (HRR) pathway of double-stranded DNA breaks arising during DNA replication or induced by DNA-damaging agents. Bind to single-stranded DNA (ssDNA) and has DNA-dependent ATPase activity. Part of the RAD51 paralog protein complex BCDX2 which acts in the BRCA1-BRCA2-dependent HR pathway. Upon DNA damage, BCDX2 acts downstream of BRCA2 recruitment and upstream of RAD51 recruitment. BCDX2 binds predominantly to the intersection of the four duplex arms of the Holliday junction and to junction of replication forks. The BCDX2 complex was originally reported to bind single-stranded DNA, single-stranded gaps in duplex DNA and specifically to nicks in duplex DNA. Involved in telomere maintenance. The BCDX2 subcomplex XRCC2:RAD51D can stimulate Holliday junction resolution by BLM. This chain is DNA repair protein RAD51 homolog 4 (RAD51D), found in Homo sapiens (Human).